A 102-amino-acid polypeptide reads, in one-letter code: RNA-binding protein Hfq (102 aa).

Residues 9-68 (DPFLNALRRERVPVSIYLVNGIKLQGQIESFDQFVILLKNTVSQMVYKHAISTVVPSRPV) enclose the Sm domain. The segment at 63–102 (VPSRPVSHHSNNTGGGSNNYHHGSSPAPSSQPQQDSADAE) is disordered. Positions 70 to 102 (HHSNNTGGGSNNYHHGSSPAPSSQPQQDSADAE) are enriched in low complexity.

The protein belongs to the Hfq family. Homohexamer.

RNA chaperone that binds small regulatory RNA (sRNAs) and mRNAs to facilitate mRNA translational regulation in response to envelope stress, environmental stress and changes in metabolite concentrations. Also binds with high specificity to tRNAs. The chain is RNA-binding protein Hfq from Erwinia tasmaniensis (strain DSM 17950 / CFBP 7177 / CIP 109463 / NCPPB 4357 / Et1/99).